Reading from the N-terminus, the 200-residue chain is Holliday junction branch migration complex subunit RuvA (200 aa).

Positions 1-63 are domain I; it reads MIAFVRGQVA…EDSLTLFGFA (63 aa). Positions 64-142 are domain II; it reads DEDEKQTFEL…APTGAGRSAG (79 aa). Residues 142 to 146 are flexible linker; it reads GVPAP. The tract at residues 147-200 is domain III; the sequence is AGAVWRDQVHQGLVGLGWPVRDAEKAVAAVAPEAGDVPDVAALLRAALRTLSKA.

It belongs to the RuvA family. In terms of assembly, homotetramer. Forms an RuvA(8)-RuvB(12)-Holliday junction (HJ) complex. HJ DNA is sandwiched between 2 RuvA tetramers; dsDNA enters through RuvA and exits via RuvB. An RuvB hexamer assembles on each DNA strand where it exits the tetramer. Each RuvB hexamer is contacted by two RuvA subunits (via domain III) on 2 adjacent RuvB subunits; this complex drives branch migration. In the full resolvosome a probable DNA-RuvA(4)-RuvB(12)-RuvC(2) complex forms which resolves the HJ.

The protein localises to the cytoplasm. The RuvA-RuvB-RuvC complex processes Holliday junction (HJ) DNA during genetic recombination and DNA repair, while the RuvA-RuvB complex plays an important role in the rescue of blocked DNA replication forks via replication fork reversal (RFR). RuvA specifically binds to HJ cruciform DNA, conferring on it an open structure. The RuvB hexamer acts as an ATP-dependent pump, pulling dsDNA into and through the RuvAB complex. HJ branch migration allows RuvC to scan DNA until it finds its consensus sequence, where it cleaves and resolves the cruciform DNA. In Nocardioides sp. (strain ATCC BAA-499 / JS614), this protein is Holliday junction branch migration complex subunit RuvA.